Here is a 131-residue protein sequence, read N- to C-terminus: Profilin (131 aa).

This sequence belongs to the profilin family. In terms of assembly, occurs in many kinds of cells as a complex with monomeric actin in a 1:1 ratio.

It localises to the cytoplasm. The protein resides in the cytoskeleton. In terms of biological role, binds to actin and affects the structure of the cytoskeleton. At high concentrations, profilin prevents the polymerization of actin, whereas it enhances it at low concentrations. By binding to PIP2, it inhibits the formation of IP3 and DG. This is Profilin from Cucumis melo (Muskmelon).